The chain runs to 97 residues: Acylphosphatase (97 aa).

An Acylphosphatase-like domain is found at 7–97 (RLTAWVHGHV…QERFEGFVER (91 aa)). Residues Arg-22 and Asn-40 contribute to the active site.

This sequence belongs to the acylphosphatase family.

It carries out the reaction an acyl phosphate + H2O = a carboxylate + phosphate + H(+). This chain is Acylphosphatase (acyP), found in Mycobacterium avium (strain 104).